Here is a 315-residue protein sequence, read N- to C-terminus: 4-hydroxy-3-methylbut-2-enyl diphosphate reductase (315 aa).

Cysteine 12 provides a ligand contact to [4Fe-4S] cluster. Residues histidine 41 and histidine 74 each contribute to the (2E)-4-hydroxy-3-methylbut-2-enyl diphosphate site. Positions 41 and 74 each coordinate dimethylallyl diphosphate. Isopentenyl diphosphate-binding residues include histidine 41 and histidine 74. Cysteine 96 provides a ligand contact to [4Fe-4S] cluster. Position 124 (histidine 124) interacts with (2E)-4-hydroxy-3-methylbut-2-enyl diphosphate. Position 124 (histidine 124) interacts with dimethylallyl diphosphate. Histidine 124 provides a ligand contact to isopentenyl diphosphate. Glutamate 126 serves as the catalytic Proton donor. Threonine 168 contacts (2E)-4-hydroxy-3-methylbut-2-enyl diphosphate. Position 198 (cysteine 198) interacts with [4Fe-4S] cluster. Positions 226, 227, 228, and 270 each coordinate (2E)-4-hydroxy-3-methylbut-2-enyl diphosphate. Residues serine 226, serine 227, asparagine 228, and serine 270 each contribute to the dimethylallyl diphosphate site. Residues serine 226, serine 227, asparagine 228, and serine 270 each contribute to the isopentenyl diphosphate site.

The protein belongs to the IspH family. Requires [4Fe-4S] cluster as cofactor.

It carries out the reaction isopentenyl diphosphate + 2 oxidized [2Fe-2S]-[ferredoxin] + H2O = (2E)-4-hydroxy-3-methylbut-2-enyl diphosphate + 2 reduced [2Fe-2S]-[ferredoxin] + 2 H(+). The catalysed reaction is dimethylallyl diphosphate + 2 oxidized [2Fe-2S]-[ferredoxin] + H2O = (2E)-4-hydroxy-3-methylbut-2-enyl diphosphate + 2 reduced [2Fe-2S]-[ferredoxin] + 2 H(+). It functions in the pathway isoprenoid biosynthesis; dimethylallyl diphosphate biosynthesis; dimethylallyl diphosphate from (2E)-4-hydroxy-3-methylbutenyl diphosphate: step 1/1. The protein operates within isoprenoid biosynthesis; isopentenyl diphosphate biosynthesis via DXP pathway; isopentenyl diphosphate from 1-deoxy-D-xylulose 5-phosphate: step 6/6. Its function is as follows. Catalyzes the conversion of 1-hydroxy-2-methyl-2-(E)-butenyl 4-diphosphate (HMBPP) into a mixture of isopentenyl diphosphate (IPP) and dimethylallyl diphosphate (DMAPP). Acts in the terminal step of the DOXP/MEP pathway for isoprenoid precursor biosynthesis. In Azotobacter vinelandii (strain DJ / ATCC BAA-1303), this protein is 4-hydroxy-3-methylbut-2-enyl diphosphate reductase.